The chain runs to 842 residues: Homeobox-leucine zipper protein REVOLUTA (842 aa).

The tract at residues 1–20 (MEMAVANHRERSSDSMNRHL) is disordered. Residues 7-20 (NHRERSSDSMNRHL) show a composition bias toward basic and acidic residues. The homeobox DNA-binding region spans 22–85 (SSGKYVRYTA…NRRCRDKQRK (64 aa)). Positions 90–121 (LQSVNRKLSAMNKLLMEENDRLQKQVSQLVCE) form a coiled coil. An START domain is found at 151 to 379 (DANSPAGLLS…LAQESNGEVV (229 aa)).

It belongs to the HD-ZIP homeobox family. Class III subfamily. As to quaternary structure, homodimer. Heterodimer with ZPR1, ZPR2, ZPR3 or ZPR4. Interacts with ESR1 and ESR2. Interacts with ZPR1, ZPR2, ZPR3 and ZPR4. Heterodimerization with ZPR3 prevents DNA binding by REV. As to expression, expressed in the interfascicular regions of stem and vascular bundles of young roots and leaves.

The protein localises to the nucleus. Its function is as follows. Probable transcription factor involved in the regulation of interfascicular fiber (cortical cells) and secondary xylem differentiation in the inflorescence stems. Required for lateral shoot meristems (LSMs) and flower meristems (FMs) initiation. May be involved in the determination of vascular patterning and organ polarity. Directly regulates the expression of AGO10, ZPR1, ZPR2, ZPR3 and ZPR4. Required to regulate adaxial-abaxial polarity and leaf axial patterning. In Arabidopsis thaliana (Mouse-ear cress), this protein is Homeobox-leucine zipper protein REVOLUTA.